The sequence spans 35 residues: Potassium channel toxin (35 aa).

Disulfide bonds link cysteine 6–cysteine 25, cysteine 11–cysteine 30, and cysteine 15–cysteine 32.

This sequence belongs to the short scorpion toxin superfamily. Potassium channel inhibitor family. Alpha-KTx 21 subfamily. In terms of tissue distribution, expressed by the venom gland.

The protein resides in the secreted. Functionally, toxin that blocks voltage-gated potassium channels (Kv). The protein is Potassium channel toxin of Tityus metuendus (Scorpion).